The primary structure comprises 86 residues: Large ribosomal subunit protein bL27 (86 aa).

The tract at residues 1-24 is disordered; that stretch reads MAHKKGTGSTRNGRDSNSKRLGVK.

The protein belongs to the bacterial ribosomal protein bL27 family.

The polypeptide is Large ribosomal subunit protein bL27 (Prochlorococcus marinus (strain AS9601)).